We begin with the raw amino-acid sequence, 445 residues long: MSMTPREIVHELNRHIIGQDDAKRAVAIALRNRWRRMQLHEELRVEVTPKNILMIGPTGVGKTEIARRLAKLANAPFIKVEATKFTEVGYVGRDVESIIRDLADAAIKLLREQEIIKVRHRAEDAAEDRILDALLPPARVGFNEDPAQSNDSNTRQLFRKRLREGQLDDKEIEIEINEAVGVDISAPPGMEEMTNQLQSLFANMGKGKTKSRKLKVKDALKLVREEEAGRLVNDEELKAKALEAVEQHGIVFIDEIDKVAKRGNSGGVDVSREGVQRDLLPLIEGCTVNTKLGMVKTDHILFIASGAFHLSKPSDLVPELQGRLPIRVELKALSPQDFERILSEPHASLTEQYRELLKTEGLKIEFKPEGIKRLAEIAWQVNEKTENIGARRLHTLLERLLEEVSFSAGDLAISPDAAPIEIDAEYVNSHLGDLAENEDLSRYIL.

Residues I17, 59–64, D254, E319, and R391 contribute to the ATP site; that span reads GVGKTE.

The protein belongs to the ClpX chaperone family. HslU subfamily. A double ring-shaped homohexamer of HslV is capped on each side by a ring-shaped HslU homohexamer. The assembly of the HslU/HslV complex is dependent on binding of ATP.

The protein localises to the cytoplasm. Its function is as follows. ATPase subunit of a proteasome-like degradation complex; this subunit has chaperone activity. The binding of ATP and its subsequent hydrolysis by HslU are essential for unfolding of protein substrates subsequently hydrolyzed by HslV. HslU recognizes the N-terminal part of its protein substrates and unfolds these before they are guided to HslV for hydrolysis. The protein is ATP-dependent protease ATPase subunit HslU of Pseudomonas savastanoi pv. phaseolicola (strain 1448A / Race 6) (Pseudomonas syringae pv. phaseolicola (strain 1448A / Race 6)).